The following is a 175-amino-acid chain: Orotate phosphoribosyltransferase (175 aa).

5-phospho-alpha-D-ribose 1-diphosphate-binding positions include Arg89, Lys90, Lys93, and 115-123 (EDIATTGQS). Orotate is bound by residues Thr119 and Arg147.

This sequence belongs to the purine/pyrimidine phosphoribosyltransferase family. PyrE subfamily. In terms of assembly, homodimer. It depends on Mg(2+) as a cofactor.

It catalyses the reaction orotidine 5'-phosphate + diphosphate = orotate + 5-phospho-alpha-D-ribose 1-diphosphate. The protein operates within pyrimidine metabolism; UMP biosynthesis via de novo pathway; UMP from orotate: step 1/2. In terms of biological role, catalyzes the transfer of a ribosyl phosphate group from 5-phosphoribose 1-diphosphate to orotate, leading to the formation of orotidine monophosphate (OMP). The chain is Orotate phosphoribosyltransferase from Halobacterium salinarum (strain ATCC 700922 / JCM 11081 / NRC-1) (Halobacterium halobium).